The sequence spans 89 residues: cAMP-regulated phosphoprotein 21 (89 aa).

The segment at 1 to 89 (MSEPGDLSQT…GGESLQDQTL (89 aa)) is disordered. Position 2 is an N-acetylserine (S2). Phosphoserine is present on residues S33 and S56.

Interacts with CALM1. Post-translationally, phosphorylation at Ser-56 favors interaction with CALM1.

It localises to the cytoplasm. In terms of biological role, may act as a competitive inhibitor of calmodulin-dependent enzymes such as calcineurin in neurons. The chain is cAMP-regulated phosphoprotein 21 (ARPP21) from Bos taurus (Bovine).